We begin with the raw amino-acid sequence, 240 residues long: Probable transcriptional regulatory protein VFMJ11_A0186 (240 aa).

It belongs to the TACO1 family.

It is found in the cytoplasm. The polypeptide is Probable transcriptional regulatory protein VFMJ11_A0186 (Aliivibrio fischeri (strain MJ11) (Vibrio fischeri)).